The primary structure comprises 69 residues: Cytochrome c oxidase subunit 8A, mitochondrial (69 aa).

The transit peptide at 1–25 (MSVLTSLLLRGLTGSARRLPVPRAK) directs the protein to the mitochondrion. The short motif at 2 to 19 (SVLTSLLLRGLTGSARRL) is the SIFI-degron element. Topologically, residues 26-36 (VHSMPPEEELG) are mitochondrial matrix. A helical membrane pass occupies residues 37–60 (TLEKAIALTSCFVSLFLPAGWILS). Residues 61–69 (HLEDYKRPE) are Mitochondrial intermembrane-facing.

The protein belongs to the cytochrome c oxidase VIII family. As to quaternary structure, component of the cytochrome c oxidase (complex IV, CIV), a multisubunit enzyme composed of 14 subunits. The complex is composed of a catalytic core of 3 subunits MT-CO1, MT-CO2 and MT-CO3, encoded in the mitochondrial DNA, and 11 supernumerary subunits COX4I, COX5A, COX5B, COX6A, COX6B, COX6C, COX7A, COX7B, COX7C, COX8 and NDUFA4, which are encoded in the nuclear genome. The complex exists as a monomer or a dimer and forms supercomplexes (SCs) in the inner mitochondrial membrane with NADH-ubiquinone oxidoreductase (complex I, CI) and ubiquinol-cytochrome c oxidoreductase (cytochrome b-c1 complex, complex III, CIII), resulting in different assemblies (supercomplex SCI(1)III(2)IV(1) and megacomplex MCI(2)III(2)IV(2)). In response to mitochondrial stress, the precursor protein is ubiquitinated by the SIFI complex in the cytoplasm before mitochondrial import, leading to its degradation. Within the SIFI complex, UBR4 initiates ubiquitin chain that are further elongated or branched by KCMF1.

Its subcellular location is the mitochondrion inner membrane. It participates in energy metabolism; oxidative phosphorylation. Component of the cytochrome c oxidase, the last enzyme in the mitochondrial electron transport chain which drives oxidative phosphorylation. The respiratory chain contains 3 multisubunit complexes succinate dehydrogenase (complex II, CII), ubiquinol-cytochrome c oxidoreductase (cytochrome b-c1 complex, complex III, CIII) and cytochrome c oxidase (complex IV, CIV), that cooperate to transfer electrons derived from NADH and succinate to molecular oxygen, creating an electrochemical gradient over the inner membrane that drives transmembrane transport and the ATP synthase. Cytochrome c oxidase is the component of the respiratory chain that catalyzes the reduction of oxygen to water. Electrons originating from reduced cytochrome c in the intermembrane space (IMS) are transferred via the dinuclear copper A center (CU(A)) of subunit 2 and heme A of subunit 1 to the active site in subunit 1, a binuclear center (BNC) formed by heme A3 and copper B (CU(B)). The BNC reduces molecular oxygen to 2 water molecules using 4 electrons from cytochrome c in the IMS and 4 protons from the mitochondrial matrix. In Papio anubis (Olive baboon), this protein is Cytochrome c oxidase subunit 8A, mitochondrial (COX8A).